A 968-amino-acid polypeptide reads, in one-letter code: RNA polymerase-associated protein RapA (968 aa).

The 170-residue stretch at 163-332 (EVGRRYAPRV…FARLRLLDPD (170 aa)) folds into the Helicase ATP-binding domain. 176-183 (DEVGLGKT) lines the ATP pocket. A DEAH box motif is present at residues 278–281 (DEAH). Residues 491-655 (RVDWLIEFLK…EFAEDLLNVL (165 aa)) enclose the Helicase C-terminal domain.

It belongs to the SNF2/RAD54 helicase family. RapA subfamily. As to quaternary structure, interacts with the RNAP. Has a higher affinity for the core RNAP than for the holoenzyme. Its ATPase activity is stimulated by binding to RNAP.

Functionally, transcription regulator that activates transcription by stimulating RNA polymerase (RNAP) recycling in case of stress conditions such as supercoiled DNA or high salt concentrations. Probably acts by releasing the RNAP, when it is trapped or immobilized on tightly supercoiled DNA. Does not activate transcription on linear DNA. Probably not involved in DNA repair. This chain is RNA polymerase-associated protein RapA, found in Shewanella baltica (strain OS223).